The following is a 247-amino-acid chain: Small ribosomal subunit protein uS3 (247 aa).

Residues 38-106 (IRDFLSEGLD…QVQLNILEVK (69 aa)) form the KH type-2 domain. The span at 214–226 (SLMNARDERPSRG) shows a compositional bias: basic and acidic residues. Residues 214–247 (SLMNARDERPSRGRRERPRRGGARRQRAEQKQEG) are disordered. Residues 227–238 (RRERPRRGGARR) show a composition bias toward basic residues.

The protein belongs to the universal ribosomal protein uS3 family. In terms of assembly, part of the 30S ribosomal subunit. Forms a tight complex with proteins S10 and S14.

Its function is as follows. Binds the lower part of the 30S subunit head. Binds mRNA in the 70S ribosome, positioning it for translation. This Corynebacterium jeikeium (strain K411) protein is Small ribosomal subunit protein uS3.